The following is a 662-amino-acid chain: UvrABC system protein B (662 aa).

Residues 31–188 (DNIEGGEKAQ…NDLVDIQFER (158 aa)) enclose the Helicase ATP-binding domain. Residue 44–51 (GATGTGKT) participates in ATP binding. The Beta-hairpin motif lies at 97-120 (YYDYYQPEAYVPSSDTYIEKDSSV). Residues 435 to 601 (QIDDLLGEIN…TIKKEIRDLI (167 aa)) form the Helicase C-terminal domain. Positions 626–661 (KELVKKLEKQMQEAVEVLDFELAAQIRDMMLEVKAL) constitute a UVR domain.

Belongs to the UvrB family. In terms of assembly, forms a heterotetramer with UvrA during the search for lesions. Interacts with UvrC in an incision complex.

It is found in the cytoplasm. Its function is as follows. The UvrABC repair system catalyzes the recognition and processing of DNA lesions. A damage recognition complex composed of 2 UvrA and 2 UvrB subunits scans DNA for abnormalities. Upon binding of the UvrA(2)B(2) complex to a putative damaged site, the DNA wraps around one UvrB monomer. DNA wrap is dependent on ATP binding by UvrB and probably causes local melting of the DNA helix, facilitating insertion of UvrB beta-hairpin between the DNA strands. Then UvrB probes one DNA strand for the presence of a lesion. If a lesion is found the UvrA subunits dissociate and the UvrB-DNA preincision complex is formed. This complex is subsequently bound by UvrC and the second UvrB is released. If no lesion is found, the DNA wraps around the other UvrB subunit that will check the other stand for damage. The chain is UvrABC system protein B from Streptococcus pneumoniae (strain Hungary19A-6).